Reading from the N-terminus, the 282-residue chain is DNA processing protein DprA (282 aa).

It belongs to the DprA/Smf family. As to quaternary structure, homodimer; forms tail-to-tail dimers, forms nucleoprotein complex (NPC) which requires at least 30 nucleotides (nt) of ssDNA becoming optimal with 50 nt. Interacts with RecA, forms mixed DprA-RecA-ssDNA filaments. Interacts with ComFA and ComFC.

It is found in the cytoplasm. In terms of biological role, protein that helps load RecA onto ssDNA during transformation. Required for DNA transformation. Not required for DNA uptake but for a later stage of transformation. Thought to interact at the cell pole with newly imported transforming ssDNA which it binds cooperatively, protecting linear and circular ssDNA from nuclease action. Forms bridges between DNA segments. Favors the loading of RecA onto ssDNA and formation of RecA-DNA filaments, triggering RecA-catalysis of ATP-driven homologous DNA pairing. The sequence is that of DNA processing protein DprA from Streptococcus pneumoniae (strain ATCC BAA-255 / R6).